Consider the following 236-residue polypeptide: Ubiquinone biosynthesis O-methyltransferase (236 aa).

Positions 39, 59, 80, and 124 each coordinate S-adenosyl-L-methionine.

This sequence belongs to the methyltransferase superfamily. UbiG/COQ3 family.

It catalyses the reaction a 3-demethylubiquinol + S-adenosyl-L-methionine = a ubiquinol + S-adenosyl-L-homocysteine + H(+). The catalysed reaction is a 3-(all-trans-polyprenyl)benzene-1,2-diol + S-adenosyl-L-methionine = a 2-methoxy-6-(all-trans-polyprenyl)phenol + S-adenosyl-L-homocysteine + H(+). It participates in cofactor biosynthesis; ubiquinone biosynthesis. O-methyltransferase that catalyzes the 2 O-methylation steps in the ubiquinone biosynthetic pathway. The protein is Ubiquinone biosynthesis O-methyltransferase of Shewanella sp. (strain W3-18-1).